The following is a 292-amino-acid chain: Bifunctional protein FolD (292 aa).

Residues 166-168 (GRS), serine 191, and isoleucine 232 each bind NADP(+).

It belongs to the tetrahydrofolate dehydrogenase/cyclohydrolase family. As to quaternary structure, homodimer.

The enzyme catalyses (6R)-5,10-methylene-5,6,7,8-tetrahydrofolate + NADP(+) = (6R)-5,10-methenyltetrahydrofolate + NADPH. The catalysed reaction is (6R)-5,10-methenyltetrahydrofolate + H2O = (6R)-10-formyltetrahydrofolate + H(+). It functions in the pathway one-carbon metabolism; tetrahydrofolate interconversion. In terms of biological role, catalyzes the oxidation of 5,10-methylenetetrahydrofolate to 5,10-methenyltetrahydrofolate and then the hydrolysis of 5,10-methenyltetrahydrofolate to 10-formyltetrahydrofolate. The polypeptide is Bifunctional protein FolD (Synechococcus sp. (strain RCC307)).